The sequence spans 704 residues: Plasma membrane ATPase 2 (704 aa).

The chain crosses the membrane as a helical span at residues 1–16 (CSIAVGMIIEIIVMYP). Residues 17 to 26 (IQHRKYRPGI) are Extracellular-facing. The chain crosses the membrane as a helical span at residues 27-48 (DNLLVLLIGGIPIAMPTVLSVT). The Cytoplasmic portion of the chain corresponds to 49–395 (MAIGSHRLAQ…TSRAIFQRMK (347 aa)). Aspartate 81 (4-aspartylphosphate intermediate) is an active-site residue. Positions 340 and 344 each coordinate Mg(2+). Residues 396-417 (NYTIYAVSITIRIVLGFMLLAL) traverse the membrane as a helical segment. The Extracellular portion of the chain corresponds to 418-422 (IWKFD). The helical transmembrane segment at 423-445 (FPPFMVLIIAILNDGTIMTISKD) threads the bilayer. Over 446 to 461 (RVKPSPLPDSWKLAEI) the chain is Cytoplasmic. Residues 462–482 (FTTGVVLGGYLAMMTVIFFWA) traverse the membrane as a helical segment. Topologically, residues 483–507 (AYETQFFPRVFGVSTLQRTATDDFR) are extracellular. A helical membrane pass occupies residues 508–528 (KLASAIYLQVSTISQALIFVT). Residues 529–540 (RSRSWSFVERPG) are Cytoplasmic-facing. Residues 541–561 (LLLVVALIVAQLVATLIAVYA) traverse the membrane as a helical segment. Topologically, residues 562-570 (SWSFAAIEG) are extracellular. A helical transmembrane segment spans residues 571-591 (IGWGWAGVIWLYNLVFYFPLD). Residues 592–704 (IIKFLIRYAL…IETIQQSYTV (113 aa)) are Cytoplasmic-facing.

Belongs to the cation transport ATPase (P-type) (TC 3.A.3) family. Type IIIA subfamily. Possibly exists as a homodimer or a homotrimer.

Its subcellular location is the cell membrane. It carries out the reaction ATP + H2O + H(+)(in) = ADP + phosphate + 2 H(+)(out). Its function is as follows. The plasma membrane ATPase of plants and fungi is a hydrogen ion pump. The proton gradient it generates drives the active transport of nutrients by H(+)-symport. The resulting external acidification and/or internal alkinization may mediate growth responses. The protein is Plasma membrane ATPase 2 (LHA2) of Solanum lycopersicum (Tomato).